A 296-amino-acid polypeptide reads, in one-letter code: Protoheme IX farnesyltransferase (296 aa).

9 consecutive transmembrane segments (helical) span residues 11-31 (PGII…AAQG), 35-55 (YPLF…GCVF), 84-104 (VTLV…YIAA), 107-127 (LAMW…SLYM), 132-152 (VYGT…GYCA), 162-182 (LILL…IAIF), 208-228 (ITLY…GGYA), 229-249 (GYKY…MALS), and 264-284 (LFVF…VDSM).

Belongs to the UbiA prenyltransferase family. Protoheme IX farnesyltransferase subfamily.

The protein localises to the cell inner membrane. The enzyme catalyses heme b + (2E,6E)-farnesyl diphosphate + H2O = Fe(II)-heme o + diphosphate. It functions in the pathway porphyrin-containing compound metabolism; heme O biosynthesis; heme O from protoheme: step 1/1. Its function is as follows. Converts heme B (protoheme IX) to heme O by substitution of the vinyl group on carbon 2 of heme B porphyrin ring with a hydroxyethyl farnesyl side group. The protein is Protoheme IX farnesyltransferase of Pectobacterium carotovorum subsp. carotovorum (strain PC1).